Consider the following 444-residue polypeptide: Divalent metal cation transporter MntH (444 aa).

The next 11 helical transmembrane spans lie at 39–59 (LLFA…GNFA), 69–89 (GYTL…FQAL), 109–128 (FSRP…AMAT), 146–166 (LPLI…LLFE), 175–195 (LVIG…MFIA), 215–235 (TALT…AVYL), 264–284 (VILA…MAAS), 304–324 (TPLL…TSGI), 346–366 (IPVW…ILAG), 372–392 (ALVI…IALI), and 417–437 (AAAI…GFTI).

It belongs to the NRAMP family.

Its subcellular location is the cell inner membrane. Functionally, h(+)-stimulated, divalent metal cation uptake system. In Granulibacter bethesdensis (strain ATCC BAA-1260 / CGDNIH1), this protein is Divalent metal cation transporter MntH.